Consider the following 146-residue polypeptide: Large ribosomal subunit protein uL15 (146 aa).

Residues 1–13 are compositionally biased toward basic and acidic residues; sequence MKLNELHPSEGSR. Residues 1–56 are disordered; that stretch reads MKLNELHPSEGSRHARKRVGRGTSSGFGKTSGRGQKGQHARSGGNTRLGFEGGQMP. Residues 23–35 show a composition bias toward gly residues; it reads TSSGFGKTSGRGQ.

It belongs to the universal ribosomal protein uL15 family. In terms of assembly, part of the 50S ribosomal subunit.

In terms of biological role, binds to the 23S rRNA. In Lactobacillus delbrueckii subsp. bulgaricus (strain ATCC 11842 / DSM 20081 / BCRC 10696 / JCM 1002 / NBRC 13953 / NCIMB 11778 / NCTC 12712 / WDCM 00102 / Lb 14), this protein is Large ribosomal subunit protein uL15.